The primary structure comprises 1291 residues: DNA-directed RNA polymerase subunit beta' (1291 aa).

Cysteine 60, cysteine 62, cysteine 75, and cysteine 78 together coordinate Zn(2+). Mg(2+) contacts are provided by aspartate 535, aspartate 537, and aspartate 539. Zn(2+)-binding residues include cysteine 878, cysteine 954, cysteine 961, and cysteine 964.

This sequence belongs to the RNA polymerase beta' chain family. The RNAP catalytic core consists of 2 alpha, 1 beta, 1 beta' and 1 omega subunit. When a sigma factor is associated with the core the holoenzyme is formed, which can initiate transcription. Mg(2+) is required as a cofactor. Requires Zn(2+) as cofactor.

It carries out the reaction RNA(n) + a ribonucleoside 5'-triphosphate = RNA(n+1) + diphosphate. Functionally, DNA-dependent RNA polymerase catalyzes the transcription of DNA into RNA using the four ribonucleoside triphosphates as substrates. This is DNA-directed RNA polymerase subunit beta' from Thermobifida fusca (strain YX).